Here is a 66-residue protein sequence, read N- to C-terminus: Large ribosomal subunit protein bL33c (66 aa).

It belongs to the bacterial ribosomal protein bL33 family.

It is found in the plastid. It localises to the chloroplast. In Arabis hirsuta (Hairy rock-cress), this protein is Large ribosomal subunit protein bL33c.